We begin with the raw amino-acid sequence, 123 residues long: MYAYTVIAFLAASVAAAGNGPSISSLTVQQAANSCANGQSVYCCNKTSNKPAGNSVGDGAGIANGLSLFSQCSKVDVNVIAIANNLLNKECQANAACCQDSPGTAAAGLVNAALPCVAISNLV.

The signal sequence occupies residues 1–16 (MYAYTVIAFLAASVAA). 4 disulfide bridges follow: Cys-35-Cys-97, Cys-43-Cys-91, Cys-44-Cys-72, and Cys-98-Cys-116.

It belongs to the fungal hydrophobin family.

Its subcellular location is the secreted. It localises to the cell wall. In terms of biological role, aerial growth, conidiation, and dispersal of filamentous fungi in the environment rely upon a capability of their secreting small amphipathic proteins called hydrophobins (HPBs) with low sequence identity. Class I can self-assemble into an outermost layer of rodlet bundles on aerial cell surfaces, conferring cellular hydrophobicity that supports fungal growth, development and dispersal; whereas Class II form highly ordered films at water-air interfaces through intermolecular interactions but contribute nothing to the rodlet structure. HYD1 and HYD2 are required for the structural integrity of the long aerial chains of microconidia. Does not seem to be important for the ability to cause seedling disease. The sequence is that of Class I hydrophobin 2 from Gibberella moniliformis (Maize ear and stalk rot fungus).